Here is a 79-residue protein sequence, read N- to C-terminus: uncharacterized protein (79 aa).

It belongs to the asfivirus D79L family.

This is an uncharacterized protein from African swine fever virus (strain Badajoz 1971 Vero-adapted) (Ba71V).